The following is a 411-amino-acid chain: 2,3-bisphosphoglycerate-independent phosphoglycerate mutase (411 aa).

It belongs to the BPG-independent phosphoglycerate mutase family. A-PGAM subfamily.

The catalysed reaction is (2R)-2-phosphoglycerate = (2R)-3-phosphoglycerate. It participates in carbohydrate degradation; glycolysis; pyruvate from D-glyceraldehyde 3-phosphate: step 3/5. Catalyzes the interconversion of 2-phosphoglycerate and 3-phosphoglycerate. The polypeptide is 2,3-bisphosphoglycerate-independent phosphoglycerate mutase (Pyrobaculum neutrophilum (strain DSM 2338 / JCM 9278 / NBRC 100436 / V24Sta) (Thermoproteus neutrophilus)).